The primary structure comprises 93 residues: Small ribosomal subunit protein mS33 (93 aa).

This sequence belongs to the mitochondrion-specific ribosomal protein mS33 family. Component of the mitochondrial small ribosomal subunit (mt-SSU). Mature yeast 74S mitochondrial ribosomes consist of a small (37S) and a large (54S) subunit. The 37S small subunit contains a 15S ribosomal RNA (15S mt-rRNA) and at least 32 different proteins. The 54S large subunit contains a 21S rRNA (21S mt-rRNA) and at least 45 different proteins.

The protein resides in the mitochondrion. In terms of biological role, component of the mitochondrial ribosome (mitoribosome), a dedicated translation machinery responsible for the synthesis of mitochondrial genome-encoded proteins, including at least some of the essential transmembrane subunits of the mitochondrial respiratory chain. The mitoribosomes are attached to the mitochondrial inner membrane and translation products are cotranslationally integrated into the membrane. In Schizosaccharomyces pombe (strain 972 / ATCC 24843) (Fission yeast), this protein is Small ribosomal subunit protein mS33 (rsm27).